The chain runs to 355 residues: S-adenosylmethionine:tRNA ribosyltransferase-isomerase (355 aa).

This sequence belongs to the QueA family. In terms of assembly, monomer.

Its subcellular location is the cytoplasm. It catalyses the reaction 7-aminomethyl-7-carbaguanosine(34) in tRNA + S-adenosyl-L-methionine = epoxyqueuosine(34) in tRNA + adenine + L-methionine + 2 H(+). Its pathway is tRNA modification; tRNA-queuosine biosynthesis. Transfers and isomerizes the ribose moiety from AdoMet to the 7-aminomethyl group of 7-deazaguanine (preQ1-tRNA) to give epoxyqueuosine (oQ-tRNA). The chain is S-adenosylmethionine:tRNA ribosyltransferase-isomerase from Gluconacetobacter diazotrophicus (strain ATCC 49037 / DSM 5601 / CCUG 37298 / CIP 103539 / LMG 7603 / PAl5).